Reading from the N-terminus, the 157-residue chain is Cytochrome c-type biogenesis protein CcmE (157 aa).

The Cytoplasmic portion of the chain corresponds to 1–8 (MHPVRKQR). The helical; Signal-anchor for type II membrane protein transmembrane segment at 9–29 (LMTVLFIVIASSVAVGLMVFA) threads the bilayer. Topologically, residues 30 to 157 (LSKNLNLFYP…KTCEGLDYAS (128 aa)) are periplasmic. Residues H124 and Y128 each coordinate heme.

It belongs to the CcmE/CycJ family.

Its subcellular location is the cell inner membrane. In terms of biological role, heme chaperone required for the biogenesis of c-type cytochromes. Transiently binds heme delivered by CcmC and transfers the heme to apo-cytochromes in a process facilitated by CcmF and CcmH. The polypeptide is Cytochrome c-type biogenesis protein CcmE (Saccharophagus degradans (strain 2-40 / ATCC 43961 / DSM 17024)).